The sequence spans 339 residues: Replication factor C subunit 5 (339 aa).

59-66 (GPPGTGKT) serves as a coordination point for ATP.

This sequence belongs to the activator 1 small subunits family. Subunit of the RFC complex, an heteropentameric complex consisting of a large subunit RFC1 and four small subunits RFC2, RFC3, RFC4 and RFC5; the RFC complex interacts with PCNA. Forms an heterotetrameric complex with RFC2, RFC3 and RFC4; this complex has ATPase activity but is not stimulated by PCNA. The heterotetramer of subunits RFC2, RFC3, RFC4 and RFC5 interacts with RAD17.

Its subcellular location is the nucleus. In terms of biological role, subunit of the replication factor C (RFC) complex which acts during elongation of primed DNA templates by DNA polymerases delta and epsilon, and is necessary for ATP-dependent loading of proliferating cell nuclear antigen (PCNA) onto primed DNA. This Mus musculus (Mouse) protein is Replication factor C subunit 5 (Rfc5).